A 124-amino-acid chain; its full sequence is uncharacterized protein (124 aa).

This is an uncharacterized protein from Magallana gigas (Pacific oyster).